Reading from the N-terminus, the 351-residue chain is Outer membrane protein A (351 aa).

The signal sequence occupies residues 1 to 21 (MKKTAIAIAVALAGFATVAQA). A run of 8 beta stranded transmembrane segments spans residues 27 to 37 (TWYTGAKLGWS), 55 to 66 (QLGAGAFGGYQV), 70 to 78 (VGFEMGYDW), 96 to 107 (QGVQLTAKLGYP), 112 to 120 (LDIYTRLGG), 147 to 156 (PVFAGGVEWA), 161 to 168 (IATRLEYQ), and 187 to 195 (LLSLGVSYR). Repeat copies occupy residues 206 to 207 (AP), 208 to 209 (AP), 210 to 211 (AP), and 212 to 213 (AP). The 4 X 2 AA tandem repeats of A-P stretch occupies residues 206–213 (APAPAPAP). Residues 215 to 343 (VQTKHFTLKS…RVEIEVKGIK (129 aa)) enclose the OmpA-like domain. A disulfide bridge connects residues Cys316 and Cys328.

This sequence belongs to the outer membrane OOP (TC 1.B.6) superfamily. OmpA family. Monomer and homodimer.

It localises to the cell outer membrane. With TolR probably plays a role in maintaining the position of the peptidoglycan cell wall in the periplasm. Acts as a porin with low permeability that allows slow penetration of small solutes; an internal gate slows down solute passage. Functionally, required for conjugation with F-type plasmids; probably serves as the mating receptor on recipient cells. In Escherichia fergusonii (strain ATCC 35469 / DSM 13698 / CCUG 18766 / IAM 14443 / JCM 21226 / LMG 7866 / NBRC 102419 / NCTC 12128 / CDC 0568-73), this protein is Outer membrane protein A.